A 671-amino-acid polypeptide reads, in one-letter code: DEAD-box ATP-dependent RNA helicase 7 (671 aa).

The tract at residues 1–84 (MPSLMLSDKK…EKKKSSKKVK (84 aa)) is disordered. Residues 26-41 (LDSKKGKKEQKLKLSD) show a composition bias toward basic and acidic residues. Phosphoserine is present on residues Ser-40 and Ser-42. Positions 50 to 60 (KKSKKKDKKRK) are enriched in basic residues. A Q motif motif is present at residues 96–124 (NAVSKFRISAPLREKLKANGIEALFPIQA). In terms of domain architecture, Helicase ATP-binding spans 127–309 (FDMVLDGADL…NRFLKRDQKT (183 aa)). 140 to 147 (ARTGQGKT) lines the ATP pocket. The DEAD box signature appears at 255–258 (DEAD). In terms of domain architecture, Helicase C-terminal spans 339 to 479 (LIPDIISCYS…HLAAPQPDEI (141 aa)). Residues 627–671 (EREPLPQKRFGGGGRGNRFGGGGGNRFGGGGGRGRGGSGGRGQRY) are disordered. A compositionally biased stretch (gly residues) spans 636-671 (FGGGGRGNRFGGGGGNRFGGGGGRGRGGSGGRGQRY).

The protein belongs to the DEAD box helicase family. DDX21/DDX50 subfamily.

The protein localises to the nucleus. The enzyme catalyses ATP + H2O = ADP + phosphate + H(+). The sequence is that of DEAD-box ATP-dependent RNA helicase 7 (RH7) from Arabidopsis thaliana (Mouse-ear cress).